Reading from the N-terminus, the 278-residue chain is Alcohol dehydrogenase-related 31 kDa protein (278 aa).

11 to 34 provides a ligand contact to NAD(+); it reads YVADCGGIALETSKVLMTKNIAKL. Ser-139 contributes to the substrate binding site. Tyr-152 functions as the Proton acceptor in the catalytic mechanism.

It belongs to the short-chain dehydrogenases/reductases (SDR) family.

In Drosophila persimilis (Fruit fly), this protein is Alcohol dehydrogenase-related 31 kDa protein (Adhr).